Reading from the N-terminus, the 506-residue chain is GTPase Der (506 aa).

2 consecutive EngA-type G domains span residues 3–166 (PVVA…GEQL) and 218–391 (IKIA…ACAT). GTP is bound by residues 9 to 16 (GRPNVGKS), 56 to 60 (DTGGI), 118 to 121 (NKTD), 224 to 231 (GRPNVGKS), 271 to 275 (DTAGV), and 336 to 339 (NKWD). The 85-residue stretch at 392–476 (QKTSTSMLTR…PIRIQFQEGN (85 aa)) folds into the KH-like domain.

It belongs to the TRAFAC class TrmE-Era-EngA-EngB-Septin-like GTPase superfamily. EngA (Der) GTPase family. Associates with the 50S ribosomal subunit.

GTPase that plays an essential role in the late steps of ribosome biogenesis. This is GTPase Der from Actinobacillus pleuropneumoniae serotype 5b (strain L20).